Consider the following 152-residue polypeptide: Phosphopantetheine adenylyltransferase (152 aa).

Ser-9 contacts substrate. ATP contacts are provided by residues 9-10 (SF) and His-17. Substrate-binding residues include Lys-41, Thr-73, and Arg-87. ATP-binding positions include 88–90 (GLR), Glu-98, and 122–128 (TSFISSS).

Belongs to the bacterial CoaD family. In terms of assembly, homohexamer. It depends on Mg(2+) as a cofactor.

It localises to the cytoplasm. The catalysed reaction is (R)-4'-phosphopantetheine + ATP + H(+) = 3'-dephospho-CoA + diphosphate. It functions in the pathway cofactor biosynthesis; coenzyme A biosynthesis; CoA from (R)-pantothenate: step 4/5. Reversibly transfers an adenylyl group from ATP to 4'-phosphopantetheine, yielding dephospho-CoA (dPCoA) and pyrophosphate. In Flavobacterium johnsoniae (strain ATCC 17061 / DSM 2064 / JCM 8514 / BCRC 14874 / CCUG 350202 / NBRC 14942 / NCIMB 11054 / UW101) (Cytophaga johnsonae), this protein is Phosphopantetheine adenylyltransferase.